A 194-amino-acid chain; its full sequence is Orotate phosphoribosyltransferase (194 aa).

A 5-phospho-alpha-D-ribose 1-diphosphate-binding site is contributed by 114–122; it reads EDVVTTGKS. Residues Thr-118 and Arg-146 each contribute to the orotate site.

This sequence belongs to the purine/pyrimidine phosphoribosyltransferase family. PyrE subfamily. In terms of assembly, homodimer. It depends on Mg(2+) as a cofactor.

The catalysed reaction is orotidine 5'-phosphate + diphosphate = orotate + 5-phospho-alpha-D-ribose 1-diphosphate. It participates in pyrimidine metabolism; UMP biosynthesis via de novo pathway; UMP from orotate: step 1/2. In terms of biological role, catalyzes the transfer of a ribosyl phosphate group from 5-phosphoribose 1-diphosphate to orotate, leading to the formation of orotidine monophosphate (OMP). The sequence is that of Orotate phosphoribosyltransferase from Clostridioides difficile (strain 630) (Peptoclostridium difficile).